Consider the following 449-residue polypeptide: Cyclin-B1-1 (449 aa).

Disordered stretches follow at residues 1 to 34 (MATRSQNVAAAPQPPQNRGNVAALGKQKAVVAGR) and 90 to 143 (AVAP…SVRK). 2 stretches are compositionally biased toward low complexity: residues 90–102 (AVAPAAVARPAQR) and 121–134 (EISSDSDQSMRQQS).

Belongs to the cyclin family. Cyclin AB subfamily.

This chain is Cyclin-B1-1 (CYCB1-1), found in Oryza sativa subsp. japonica (Rice).